The chain runs to 430 residues: Histidinol dehydrogenase (430 aa).

Tyr129, Gln190, and Asn213 together coordinate NAD(+). Residues Ser236, Gln258, and His261 each contribute to the substrate site. Positions 258 and 261 each coordinate Zn(2+). Catalysis depends on proton acceptor residues Glu326 and His327. Residues His327, Asp360, Glu414, and His419 each coordinate substrate. Asp360 is a binding site for Zn(2+). His419 contributes to the Zn(2+) binding site.

It belongs to the histidinol dehydrogenase family. Zn(2+) serves as cofactor.

The catalysed reaction is L-histidinol + 2 NAD(+) + H2O = L-histidine + 2 NADH + 3 H(+). It participates in amino-acid biosynthesis; L-histidine biosynthesis; L-histidine from 5-phospho-alpha-D-ribose 1-diphosphate: step 9/9. Functionally, catalyzes the sequential NAD-dependent oxidations of L-histidinol to L-histidinaldehyde and then to L-histidine. The polypeptide is Histidinol dehydrogenase (Gluconobacter oxydans (strain 621H) (Gluconobacter suboxydans)).